The primary structure comprises 137 residues: Nucleoside diphosphate kinase (137 aa).

The ATP site is built by lysine 10, phenylalanine 58, arginine 86, threonine 92, arginine 103, and asparagine 113. Histidine 116 (pros-phosphohistidine intermediate) is an active-site residue.

It belongs to the NDK family. Homotetramer. Mg(2+) serves as cofactor.

Its subcellular location is the cytoplasm. The enzyme catalyses a 2'-deoxyribonucleoside 5'-diphosphate + ATP = a 2'-deoxyribonucleoside 5'-triphosphate + ADP. It catalyses the reaction a ribonucleoside 5'-diphosphate + ATP = a ribonucleoside 5'-triphosphate + ADP. Functionally, major role in the synthesis of nucleoside triphosphates other than ATP. The ATP gamma phosphate is transferred to the NDP beta phosphate via a ping-pong mechanism, using a phosphorylated active-site intermediate. This Helicobacter pylori (strain Shi470) protein is Nucleoside diphosphate kinase.